The following is a 149-amino-acid chain: Large ribosomal subunit protein bL20m (149 aa).

The N-terminal 9 residues, 1 to 9 (MVFLSAPLW), are a transit peptide targeting the mitochondrion.

It belongs to the bacterial ribosomal protein bL20 family. In terms of assembly, component of the mitochondrial ribosome large subunit (39S) which comprises a 16S rRNA and about 50 distinct proteins. Interacts with OXA1L.

It localises to the mitochondrion. The chain is Large ribosomal subunit protein bL20m (MRPL20) from Bos taurus (Bovine).